The primary structure comprises 174 residues: Ribosome rescue factor SmrB (174 aa).

A Smr domain is found at 96-171 (LDLHGMNQQQ…GDSAILVLLD (76 aa)).

Belongs to the SmrB family. As to quaternary structure, associates with collided ribosomes, but not with correctly translating polysomes.

Its function is as follows. Acts as a ribosome collision sensor. Detects stalled/collided disomes (pairs of ribosomes where the leading ribosome is stalled and a second ribosome has collided with it) and endonucleolytically cleaves mRNA at the 5' boundary of the stalled ribosome. Stalled/collided disomes form a new interface (primarily via the 30S subunits) that binds SmrB. Cleaved mRNA becomes available for tmRNA ligation, leading to ribosomal subunit dissociation and rescue of stalled ribosomes. This is Ribosome rescue factor SmrB from Aeromonas hydrophila subsp. hydrophila (strain ATCC 7966 / DSM 30187 / BCRC 13018 / CCUG 14551 / JCM 1027 / KCTC 2358 / NCIMB 9240 / NCTC 8049).